The primary structure comprises 370 residues: MAPMSETLVVKIGTSSLTNPHHPGLALSTIAGLVEVICQLRRQGYNVVLVSSGAVGVGCTRLGLRDRPSRIAQRQAIAAVGQGRLMRTYDDLFTTLGQPIAQVLLTRGDLAQRQRYINAYQTFQELFELGVVPIVNENDTVAVEELKFGDNDTLSALVASLVEAQWLFLLTDVDRLYTADPRQDPNAKPITIVHDLSELESIQAGGQGSRWGTGGMATKLTAAKIATQASVRTVITQGRSPENLLKILAGEAIGTWFEPQPETVNARKRWIAHGLVPTGKLLLDAGAVQAIQAGGKSLLAAGIQAIEGDFEAQDAVQLCDLNGTEIARGLVNYDSHELQQIRGCQSDQIVQILGYEGAETIVHRDNLVLS.

Lys11 is a binding site for ATP. Positions 52, 139, and 151 each coordinate substrate. ATP-binding positions include Thr171 to Asp172 and Thr213 to Lys219. Residues Thr278–Glu356 enclose the PUA domain.

The protein belongs to the glutamate 5-kinase family.

The protein resides in the cytoplasm. The enzyme catalyses L-glutamate + ATP = L-glutamyl 5-phosphate + ADP. It participates in amino-acid biosynthesis; L-proline biosynthesis; L-glutamate 5-semialdehyde from L-glutamate: step 1/2. Its function is as follows. Catalyzes the transfer of a phosphate group to glutamate to form L-glutamate 5-phosphate. The chain is Glutamate 5-kinase from Synechococcus sp. (strain ATCC 27144 / PCC 6301 / SAUG 1402/1) (Anacystis nidulans).